The sequence spans 797 residues: Kinesin-like protein KIF18B (797 aa).

The Kinesin motor domain occupies 11–352; that stretch reads TVAVVVRVRP…LKYANRAKEI (342 aa). An ATP-binding site is contributed by 110–117; it reads GATGAGKT. A coiled-coil region spans residues 367 to 402; that stretch reads ISKYATICEQLKTEVADLQAKLRAYEDAARDAGKQI. Disordered regions lie at residues 412–476, 528–564, 579–640, and 730–797; these read EEAV…PNRL, AAVS…PSVP, LSSP…KEPQ, and KGSS…SGPR. The span at 594 to 608 shows a compositional bias: polar residues; the sequence is MSNTSRLETPHSLNT. Over residues 731 to 744 the composition is skewed to low complexity; it reads GSSIPKPSSISKGS.

The protein belongs to the TRAFAC class myosin-kinesin ATPase superfamily. Kinesin family.

It localises to the nucleus. The protein localises to the cytoplasm. It is found in the cytoskeleton. May play an important role in microtubule plus-end depolymerizing activity in mitotic cells. The polypeptide is Kinesin-like protein KIF18B (KIF18B) (Gallus gallus (Chicken)).